The following is a 730-amino-acid chain: Guanylate cyclase soluble subunit alpha-2 (730 aa).

The interval 1 to 53 is disordered; that stretch reads MSRRKISSESFSSLGSDYLETSPEEEGECPLSKLCWNGSRSPPGPPGSRAAAM. The Guanylate cyclase domain occupies 519-646; it reads TMLFSDIVGF…NNVTLASKFE (128 aa).

It belongs to the adenylyl cyclase class-4/guanylyl cyclase family. As to quaternary structure, heterodimer of an alpha and a beta chain.

The protein resides in the cytoplasm. It carries out the reaction GTP = 3',5'-cyclic GMP + diphosphate. Its activity is regulated as follows. Activated by nitric oxide in the presence of magnesium or manganese ions. Functionally, has guanylyl cyclase on binding to the beta-1 subunit. The polypeptide is Guanylate cyclase soluble subunit alpha-2 (Gucy1a2) (Rattus norvegicus (Rat)).